Reading from the N-terminus, the 449-residue chain is Chromosomal replication initiator protein DnaA (449 aa).

The interval 1–72 (MENIHDLWER…SETIDDLTGV (72 aa)) is domain I, interacts with DnaA modulators. Residues 72–111 (VRLYPKFVIPTSQLDEPFVEQELKKPMKQPPAQNGEMPNN) form a domain II region. Residues 112 to 328 (MLNDKYTFDT…GALIRVVAYS (217 aa)) are domain III, AAA+ region. Residues Gly-156, Gly-158, Lys-159, and Thr-160 each contribute to the ATP site. Positions 329–449 (SLINQDMNAD…IQDISDKLRS (121 aa)) are domain IV, binds dsDNA.

The protein belongs to the DnaA family. Oligomerizes as a right-handed, spiral filament on DNA at oriC.

The protein localises to the cytoplasm. In terms of biological role, plays an essential role in the initiation and regulation of chromosomal replication. ATP-DnaA binds to the origin of replication (oriC) to initiate formation of the DNA replication initiation complex once per cell cycle. Binds the DnaA box (a 9 base pair repeat at the origin) and separates the double-stranded (ds)DNA. Forms a right-handed helical filament on oriC DNA; dsDNA binds to the exterior of the filament while single-stranded (ss)DNA is stabiized in the filament's interior. The ATP-DnaA-oriC complex binds and stabilizes one strand of the AT-rich DNA unwinding element (DUE), permitting loading of DNA polymerase. After initiation quickly degrades to an ADP-DnaA complex that is not apt for DNA replication. Binds acidic phospholipids. The polypeptide is Chromosomal replication initiator protein DnaA (Halalkalibacterium halodurans (strain ATCC BAA-125 / DSM 18197 / FERM 7344 / JCM 9153 / C-125) (Bacillus halodurans)).